The sequence spans 364 residues: tRNA-specific 2-thiouridylase MnmA 1 (364 aa).

ATP is bound by residues 10-17 and Met36; that span reads GMSGGVDS. Cys106 (nucleophile) is an active-site residue. A disulfide bridge links Cys106 with Cys204. Gly130 is a binding site for ATP. The interval 154-156 is interaction with tRNA; the sequence is KDQ. The active-site Cysteine persulfide intermediate is the Cys204. Positions 310–311 are interaction with tRNA; it reads RY.

Belongs to the MnmA/TRMU family.

It localises to the cytoplasm. It catalyses the reaction S-sulfanyl-L-cysteinyl-[protein] + uridine(34) in tRNA + AH2 + ATP = 2-thiouridine(34) in tRNA + L-cysteinyl-[protein] + A + AMP + diphosphate + H(+). In terms of biological role, catalyzes the 2-thiolation of uridine at the wobble position (U34) of tRNA, leading to the formation of s(2)U34. The protein is tRNA-specific 2-thiouridylase MnmA 1 of Thermoanaerobacter sp. (strain X514).